The sequence spans 121 residues: Large ribosomal subunit protein bL12 (121 aa).

Belongs to the bacterial ribosomal protein bL12 family. As to quaternary structure, homodimer. Part of the ribosomal stalk of the 50S ribosomal subunit. Forms a multimeric L10(L12)X complex, where L10 forms an elongated spine to which 2 to 4 L12 dimers bind in a sequential fashion. Binds GTP-bound translation factors.

Its function is as follows. Forms part of the ribosomal stalk which helps the ribosome interact with GTP-bound translation factors. Is thus essential for accurate translation. The protein is Large ribosomal subunit protein bL12 of Clostridium perfringens (strain ATCC 13124 / DSM 756 / JCM 1290 / NCIMB 6125 / NCTC 8237 / Type A).